The following is a 207-amino-acid chain: Large ribosomal subunit protein bL25 (207 aa).

It belongs to the bacterial ribosomal protein bL25 family. CTC subfamily. As to quaternary structure, part of the 50S ribosomal subunit; part of the 5S rRNA/L5/L18/L25 subcomplex. Contacts the 5S rRNA. Binds to the 5S rRNA independently of L5 and L18.

Functionally, this is one of the proteins that binds to the 5S RNA in the ribosome where it forms part of the central protuberance. The sequence is that of Large ribosomal subunit protein bL25 from Orientia tsutsugamushi (strain Ikeda) (Rickettsia tsutsugamushi).